Here is a 328-residue protein sequence, read N- to C-terminus: Lactamase-like protein nscB (328 aa).

His-97, His-99, Asp-101, and His-102 together coordinate Zn(2+). Catalysis depends on Asp-101, which acts as the Proton donor/acceptor.

The protein belongs to the metallo-beta-lactamase superfamily. Requires Zn(2+) as cofactor.

It participates in secondary metabolite biosynthesis. Its function is as follows. Lactamase-like protein; part of the gene cluster that mediates the biosynthesis of neosartoricin, a prenylated anthracenone that exhibits T-cell antiproliferative activity, suggestive of a physiological role as an immunosuppressive agent. The non-reducing polyketide synthase nscA probably synthesizes and cyclizes the decaketide backbone. The hydrolase nscB then mediates the product release through hydrolysis followed by spontaneous decarboxylation. The prenyltransferase nscD catalyzes the addition of the dimethylallyl group to the aromatic C5. The FAD-dependent monooxygenase nscC is then responsible for the stereospecific hydroxylation at C2. There is no gene encoding O-acetyltransferase in the nsc gene cluster; thus, the last step of 2-O-acetylation leading to neosartoricin may be catalyzed by an unidentified O-acetyltransferase. The chain is Lactamase-like protein nscB from Neosartorya fischeri (strain ATCC 1020 / DSM 3700 / CBS 544.65 / FGSC A1164 / JCM 1740 / NRRL 181 / WB 181) (Aspergillus fischerianus).